A 150-amino-acid chain; its full sequence is Catabolic 3-dehydroquinase 1 (150 aa).

Tyr-24 acts as the Proton acceptor in catalysis. Positions 75, 81, and 88 each coordinate substrate. The Proton donor role is filled by His-101. Substrate contacts are provided by residues 102–103 and Arg-112; that span reads VS.

The protein belongs to the type-II 3-dehydroquinase family. In terms of assembly, homododecamer. Adopts a ring-like structure, composed of an arrangement of two hexameric rings stacked on top of one another.

The enzyme catalyses 3-dehydroquinate = 3-dehydroshikimate + H2O. It functions in the pathway aromatic compound metabolism; 3,4-dihydroxybenzoate biosynthesis; 3,4-dihydroxybenzoate from 3-dehydroquinate: step 1/2. Is involved in the catabolism of quinate. Allows the utilization of quinate as carbon source via the beta-ketoadipate pathway. This chain is Catabolic 3-dehydroquinase 1, found in Aspergillus fumigatus (strain ATCC MYA-4609 / CBS 101355 / FGSC A1100 / Af293) (Neosartorya fumigata).